A 160-amino-acid polypeptide reads, in one-letter code: 2-C-methyl-D-erythritol 2,4-cyclodiphosphate synthase (160 aa).

A divalent metal cation is bound by residues Asp-10 and His-12. Residues 10-12 (DVH) and 36-37 (HS) each bind 4-CDP-2-C-methyl-D-erythritol 2-phosphate. His-44 contacts a divalent metal cation. 4-CDP-2-C-methyl-D-erythritol 2-phosphate is bound by residues 58 to 60 (DIG), 63 to 67 (FPDTD), 102 to 108 (AQAPKMA), 134 to 137 (TTTE), Phe-141, and Arg-144.

It belongs to the IspF family. In terms of assembly, homotrimer. The cofactor is a divalent metal cation.

The catalysed reaction is 4-CDP-2-C-methyl-D-erythritol 2-phosphate = 2-C-methyl-D-erythritol 2,4-cyclic diphosphate + CMP. It functions in the pathway isoprenoid biosynthesis; isopentenyl diphosphate biosynthesis via DXP pathway; isopentenyl diphosphate from 1-deoxy-D-xylulose 5-phosphate: step 4/6. In terms of biological role, involved in the biosynthesis of isopentenyl diphosphate (IPP) and dimethylallyl diphosphate (DMAPP), two major building blocks of isoprenoid compounds. Catalyzes the conversion of 4-diphosphocytidyl-2-C-methyl-D-erythritol 2-phosphate (CDP-ME2P) to 2-C-methyl-D-erythritol 2,4-cyclodiphosphate (ME-CPP) with a corresponding release of cytidine 5-monophosphate (CMP). The sequence is that of 2-C-methyl-D-erythritol 2,4-cyclodiphosphate synthase from Shewanella denitrificans (strain OS217 / ATCC BAA-1090 / DSM 15013).